A 562-amino-acid chain; its full sequence is Probable sesquiterpene synthase (562 aa).

3 residues coordinate Mg(2+): Asp315, Asp319, and Glu467. The DDXXD motif signature appears at 315 to 319; the sequence is DDIYD.

Belongs to the terpene synthase family. Tpsa subfamily. Mg(2+) is required as a cofactor. The cofactor is Mn(2+).

Functionally, sesquiterpene synthase. This chain is Probable sesquiterpene synthase (SesquiTPS), found in Santalum austrocaledonicum (Sandalwood).